The following is a 196-amino-acid chain: Urease accessory protein UreE (196 aa).

The interval arginine 150–aspartate 196 is disordered. Over residues glycine 156–aspartate 196 the composition is skewed to basic and acidic residues.

Belongs to the UreE family.

It localises to the cytoplasm. Involved in urease metallocenter assembly. Binds nickel. Probably functions as a nickel donor during metallocenter assembly. This is Urease accessory protein UreE from Mesorhizobium japonicum (strain LMG 29417 / CECT 9101 / MAFF 303099) (Mesorhizobium loti (strain MAFF 303099)).